A 180-amino-acid polypeptide reads, in one-letter code: Large ribosomal subunit protein uL6 (180 aa).

This sequence belongs to the universal ribosomal protein uL6 family. Part of the 50S ribosomal subunit.

Functionally, this protein binds to the 23S rRNA, and is important in its secondary structure. It is located near the subunit interface in the base of the L7/L12 stalk, and near the tRNA binding site of the peptidyltransferase center. The chain is Large ribosomal subunit protein uL6 from Picosynechococcus sp. (strain ATCC 27264 / PCC 7002 / PR-6) (Agmenellum quadruplicatum).